Reading from the N-terminus, the 94-residue chain is Venom protein 59.1 (94 aa).

Residues 1-22 (MNSREMFCVFILFASFFYCSYA) form the signal peptide. 6 disulfide bridges follow: C19–C47, C26–C49, C32–C50, C38–C53, C61–C76, and C70–C91. Residues 23 to 94 (EQECNCDKSC…GEALEICLRA (72 aa)) form the IGFBP N-terminal domain.

Expressed by the venom gland.

Its subcellular location is the secreted. This Lychas mucronatus (Chinese swimming scorpion) protein is Venom protein 59.1.